The primary structure comprises 264 residues: Glutamate racemase (264 aa).

Substrate-binding positions include 10 to 11 (DS) and 42 to 43 (YG). The Proton donor/acceptor role is filled by C73. Position 74–75 (74–75 (NT)) interacts with substrate. C183 functions as the Proton donor/acceptor in the catalytic mechanism. Residue 184 to 185 (TH) participates in substrate binding.

The protein belongs to the aspartate/glutamate racemases family.

The catalysed reaction is L-glutamate = D-glutamate. The protein operates within cell wall biogenesis; peptidoglycan biosynthesis. Provides the (R)-glutamate required for cell wall biosynthesis. This is Glutamate racemase from Streptococcus agalactiae serotype III (strain NEM316).